The primary structure comprises 118 residues: Large ribosomal subunit protein bL20 (118 aa).

This sequence belongs to the bacterial ribosomal protein bL20 family.

Functionally, binds directly to 23S ribosomal RNA and is necessary for the in vitro assembly process of the 50S ribosomal subunit. It is not involved in the protein synthesizing functions of that subunit. The sequence is that of Large ribosomal subunit protein bL20 from Francisella tularensis subsp. novicida (strain U112).